A 274-amino-acid polypeptide reads, in one-letter code: Penicillin-insensitive murein endopeptidase (274 aa).

An N-terminal signal peptide occupies residues 1 to 19 (MKKTVIALLAWFVSSASLA). 3 disulfides stabilise this stretch: cysteine 44–cysteine 265, cysteine 187–cysteine 235, and cysteine 216–cysteine 223. Zn(2+) is bound by residues histidine 110, histidine 113, aspartate 120, aspartate 147, histidine 150, and histidine 211. The interval 225-274 (DQPLPPPGDGCGAELQSWFEPPKPGTTKPEKKTPPPLPPSCQALLDEHVL) is disordered.

The protein belongs to the peptidase M74 family. In terms of assembly, dimer. Requires Zn(2+) as cofactor.

It is found in the periplasm. In terms of biological role, murein endopeptidase that cleaves the D-alanyl-meso-2,6-diamino-pimelyl amide bond that connects peptidoglycan strands. Likely plays a role in the removal of murein from the sacculus. In Salmonella paratyphi C (strain RKS4594), this protein is Penicillin-insensitive murein endopeptidase.